Reading from the N-terminus, the 637-residue chain is MGVRSAAKEMHERDHNSDSSSLVTSLMKSWRISSASSSKKPSLYKMNTTESTSLPSGYASSADRDRRTSDGNFEAMAKQQASTRRTSNSYSPLRYVNPTLSTASNESPRPALLLRQHHQRHHHHQQPRHSSSGSVGNNCSNSTEPNKKGDRYFKDLDEDWSAVIDDYNMPIPILTNGGFGTPVAPTRTLSRKSTSSSINSISNMGTSAVRNSSSSFTYPQLPQLQKEKTNDSKKTQLEIENERDVQELNSIIQRISKFDNILKDKTIINQQDLRQISWNGIPKIHRPVVWKLLIGYLPVNTKRQEGFLQRKRKEYRDSLKHTFSDQHSRDIPTWHQIEIDIPRTNPHIPLYQFKSVQNSLQRILYLWAIRHPASGYVQGINDLVTPFFETFLTEYLPPSQIDDVEIKDPSTYMVDEQITDLEADTFWCLTKLLEQITDNYIHGQPGILRQVKNLSQLVKRIDADLYNHFQNEHVEFIQFAFRWMNCLLMREFQMGTVIRMWDTYLSETSQEVTSSYSMSSNDIKPPVTPTEPRVASFVTPTKDFQSPTTALSNMTPNNAVEDSGKMRQSSLNEFHVFVCAAFLIKWSDQLMEMDFQETITFLQNPPTKDWTETDIEMLLSEAFIWQSLYKDATSHWL.

Basic and acidic residues predominate over residues 1-17 (MGVRSAAKEMHERDHNS). Disordered stretches follow at residues 1 to 152 (MGVR…GDRY) and 187 to 233 (RTLS…NDSK). The segment covering 18–27 (DSSSLVTSLM) has biased composition (polar residues). A compositionally biased stretch (low complexity) spans 28-45 (KSWRISSASSSKKPSLYK). Over residues 46–59 (MNTTESTSLPSGYA) the composition is skewed to polar residues. The residue at position 69 (serine 69) is a Phosphoserine. Composition is skewed to polar residues over residues 79–91 (QQAS…NSYS) and 98–107 (PTLSTASNES). Over residues 115–127 (RQHHQRHHHHQQP) the composition is skewed to basic residues. 2 stretches are compositionally biased toward low complexity: residues 128–142 (RHSS…CSNS) and 187–207 (RTLS…MGTS). Polar residues predominate over residues 208-223 (AVRNSSSSFTYPQLPQ). A Phosphoserine modification is found at serine 250. Positions 280–508 (GIPKIHRPVV…RMWDTYLSET (229 aa)) constitute a Rab-GAP TBC domain. A disordered region spans residues 543–564 (DFQSPTTALSNMTPNNAVEDSG).

Its subcellular location is the golgi apparatus. It localises to the golgi stack. In terms of biological role, GTPase-activating protein (GAP) that stimulates specifically the intrinsic GTPase activity of Ypt/Rab-type GTPases YPT1 and YPT7. Functions on the Golgi as a negative regulator of YPT1. Functions on the vacuole as a negative regulator of YPT7. It is also active on SEC4 and YPT51. Provides a catalytic arginine (arginine finger) and glutamine (glutamine finger) in trans to accelerate the GTP hydrolysis rate of the substrate GTPase. The protein is GTPase-activating protein GYP1 (GYP1) of Saccharomyces cerevisiae (strain ATCC 204508 / S288c) (Baker's yeast).